The following is a 380-amino-acid chain: Succinate--CoA ligase [ADP-forming] subunit beta 2 (380 aa).

The ATP-grasp domain occupies 9–235 (KQIFSKHGIR…YTEADQMERI (227 aa)). Residues Lys45, 52–54 (GRG), Glu91, Ile94, and Glu99 contribute to the ATP site. The Mg(2+) site is built by Asn191 and Asp204. Substrate is bound by residues Asn255 and 312 to 314 (GIT).

The protein belongs to the succinate/malate CoA ligase beta subunit family. As to quaternary structure, heterotetramer of two alpha and two beta subunits. It depends on Mg(2+) as a cofactor.

It carries out the reaction succinate + ATP + CoA = succinyl-CoA + ADP + phosphate. The catalysed reaction is GTP + succinate + CoA = succinyl-CoA + GDP + phosphate. It participates in carbohydrate metabolism; tricarboxylic acid cycle; succinate from succinyl-CoA (ligase route): step 1/1. In terms of biological role, succinyl-CoA synthetase functions in the citric acid cycle (TCA), coupling the hydrolysis of succinyl-CoA to the synthesis of either ATP or GTP and thus represents the only step of substrate-level phosphorylation in the TCA. The beta subunit provides nucleotide specificity of the enzyme and binds the substrate succinate, while the binding sites for coenzyme A and phosphate are found in the alpha subunit. In Archaeoglobus fulgidus (strain ATCC 49558 / DSM 4304 / JCM 9628 / NBRC 100126 / VC-16), this protein is Succinate--CoA ligase [ADP-forming] subunit beta 2.